Reading from the N-terminus, the 282-residue chain is Probable septum site-determining protein MinC (282 aa).

The segment at 103–147 (SQSRRGGKDEAPKEKAGKPEATAASGQTDAEAAGNTGKGKDSEGA) is disordered. Residues 104 to 120 (QSRRGGKDEAPKEKAGK) show a composition bias toward basic and acidic residues.

This sequence belongs to the MinC family. As to quaternary structure, interacts with MinD and FtsZ.

Functionally, cell division inhibitor that blocks the formation of polar Z ring septums. Rapidly oscillates between the poles of the cell to destabilize FtsZ filaments that have formed before they mature into polar Z rings. Prevents FtsZ polymerization. This is Probable septum site-determining protein MinC from Cupriavidus metallidurans (strain ATCC 43123 / DSM 2839 / NBRC 102507 / CH34) (Ralstonia metallidurans).